The chain runs to 31 residues: Ranatuerin-2 (31 aa).

Cysteine 23 and cysteine 28 are joined by a disulfide.

Belongs to the frog skin active peptide (FSAP) family. Ranatuerin subfamily. As to expression, expressed by the skin glands.

It localises to the secreted. Functionally, antibacterial activity against Gram-positive bacterium S.aureus (MIC=60 uM). Shows no detectable hemolytic activity towards human erythrocytes. The polypeptide is Ranatuerin-2 (Aquarana catesbeiana (American bullfrog)).